The sequence spans 217 residues: UPF0502 protein VIBHAR_05349 (217 aa).

The protein belongs to the UPF0502 family.

The polypeptide is UPF0502 protein VIBHAR_05349 (Vibrio campbellii (strain ATCC BAA-1116)).